A 177-amino-acid polypeptide reads, in one-letter code: Large ribosomal subunit protein uL6 (177 aa).

The protein belongs to the universal ribosomal protein uL6 family. In terms of assembly, part of the 50S ribosomal subunit.

Its function is as follows. This protein binds to the 23S rRNA, and is important in its secondary structure. It is located near the subunit interface in the base of the L7/L12 stalk, and near the tRNA binding site of the peptidyltransferase center. The sequence is that of Large ribosomal subunit protein uL6 from Pseudoalteromonas atlantica (strain T6c / ATCC BAA-1087).